A 170-amino-acid chain; its full sequence is Small ribosomal subunit protein uS5 (170 aa).

The 64-residue stretch at 16-79 (IEDQLVAINR…EAGKKNMISV (64 aa)) folds into the S5 DRBM domain.

It belongs to the universal ribosomal protein uS5 family. Part of the 30S ribosomal subunit. Contacts proteins S4 and S8.

Functionally, with S4 and S12 plays an important role in translational accuracy. Its function is as follows. Located at the back of the 30S subunit body where it stabilizes the conformation of the head with respect to the body. The polypeptide is Small ribosomal subunit protein uS5 (Lactobacillus delbrueckii subsp. bulgaricus (strain ATCC 11842 / DSM 20081 / BCRC 10696 / JCM 1002 / NBRC 13953 / NCIMB 11778 / NCTC 12712 / WDCM 00102 / Lb 14)).